The chain runs to 345 residues: Peptidoglycan-recognition protein LE (345 aa).

Basic and acidic residues predominate over residues 1-16 (MSESGIKKLSQERTRE). Residues 1–38 (MSESGIKKLSQERTREWLASQEDEELESIAESSVVDSL) form a disordered region. Residues asparagine 52, asparagine 95, asparagine 98, and asparagine 106 are each glycosylated (N-linked (GlcNAc...) asparagine). A disordered region spans residues 124–152 (NRRDRRHVSPPRDNAPKTPTHFEDDYQDE). The N-acetylmuramoyl-L-alanine amidase domain occupies 198–324 (PVKYVVILHT…CQCNSTESPG (127 aa)). Peptidoglycan-binding positions include histidine 206, 229–240 (HIESRGWNDIAY), arginine 254, 261–267 (AHTLGYN), and 314–322 (HCQCNSTES). Residue asparagine 318 is glycosylated (N-linked (GlcNAc...) asparagine).

It belongs to the N-acetylmuramoyl-L-alanine amidase 2 family. Monomer. Peptidoglycan binding induces oligomerization. In terms of tissue distribution, expressed in hemolymph. Localizes at the lumenal surface of the trachea (at protein level).

Its subcellular location is the secreted. In terms of biological role, peptidoglycan-recognition protein that plays a key role in innate immunity by binding to murein peptidoglycans (PGN) of Gram-negative bacteria and activating the imd/Relish pathway. Has no activity against on Gram-positive bacteria. Binds to diaminopimelic acid-type PGN (DAP-type PGN), an activator of the imd/Relish pathway. Functions synergistically with PGRP-LC in producing resistance to E.coli and B.megaterium infections, which have the DAP-type peptidoglycan. Acts both upstream and in parallel with PGRP-LC in the imd/Relish pathway, and is required for infection-dependent activation of melanization. Required for Relish processing and nuclear translocation following proteolytic cleavage. Its localization suggests a role in the recognition and subsequent activation of the signaling at the first point of contact with invading bacteria. This is Peptidoglycan-recognition protein LE (PGRP-LE) from Drosophila melanogaster (Fruit fly).